The primary structure comprises 436 residues: MFDSTLNPLWQRYILAVQEEVKPALGCTEPISLALAAAVAAAELEGPVERVEAWVSPNLMKNGLGVTVPGTGMVGLPIAAALGALGGNANAGLEVLKDATAQAIADAKALLAAGKVSVKIQEPCNEILFSRAKVWNGEKWACVTIVGGHTNIVRIETHNGVVFTQQACVAEGEQESPLTVLSRTTLAEILKFVNEVPFAAIRFILDSAKLNCALSQEGLSGKWGLHIGATLEKQCERGLLAKDLSSSIVIRTSAASDARMGGATLPAMSNSGSGNQGITATMPVVVVAEHFGADDERLARALMLSHLSAIYIHNQLPRLSALCAATTAAMGAAAGMAWLVDGRYETISMAISSMIGDVSGMICDGASNSCAMKVSTSASAAWKAVLMALDDTAVTGNEGIVAHDVEQSIANLCALASHSMQQTDRQIIEIMASKAR.

This sequence belongs to the UPF0597 family.

This is UPF0597 protein YhaM from Shigella sonnei (strain Ss046).